We begin with the raw amino-acid sequence, 402 residues long: Dual-specificity RNA methyltransferase RlmN (402 aa).

E94 serves as the catalytic Proton acceptor. The region spanning E100–D351 is the Radical SAM core domain. C107 and C356 are disulfide-bonded. Positions 114, 118, and 121 each coordinate [4Fe-4S] cluster. S-adenosyl-L-methionine contacts are provided by residues G182–E183, S214, S236–H238, and N313. The active-site S-methylcysteine intermediate is the C356.

The protein belongs to the radical SAM superfamily. RlmN family. The cofactor is [4Fe-4S] cluster.

Its subcellular location is the cytoplasm. It carries out the reaction adenosine(2503) in 23S rRNA + 2 reduced [2Fe-2S]-[ferredoxin] + 2 S-adenosyl-L-methionine = 2-methyladenosine(2503) in 23S rRNA + 5'-deoxyadenosine + L-methionine + 2 oxidized [2Fe-2S]-[ferredoxin] + S-adenosyl-L-homocysteine. The catalysed reaction is adenosine(37) in tRNA + 2 reduced [2Fe-2S]-[ferredoxin] + 2 S-adenosyl-L-methionine = 2-methyladenosine(37) in tRNA + 5'-deoxyadenosine + L-methionine + 2 oxidized [2Fe-2S]-[ferredoxin] + S-adenosyl-L-homocysteine. Specifically methylates position 2 of adenine 2503 in 23S rRNA and position 2 of adenine 37 in tRNAs. m2A2503 modification seems to play a crucial role in the proofreading step occurring at the peptidyl transferase center and thus would serve to optimize ribosomal fidelity. This chain is Dual-specificity RNA methyltransferase RlmN, found in Polynucleobacter asymbioticus (strain DSM 18221 / CIP 109841 / QLW-P1DMWA-1) (Polynucleobacter necessarius subsp. asymbioticus).